A 306-amino-acid polypeptide reads, in one-letter code: Ornithine carbamoyltransferase (306 aa).

Residues serine 53–threonine 56, glutamine 80, arginine 104, and histidine 131–glutamine 134 each bind carbamoyl phosphate. L-ornithine is bound by residues asparagine 162, aspartate 220, and serine 224–methionine 225. Residues cysteine 260–leucine 261 and arginine 288 each bind carbamoyl phosphate.

The protein belongs to the aspartate/ornithine carbamoyltransferase superfamily. OTCase family.

It is found in the cytoplasm. It catalyses the reaction carbamoyl phosphate + L-ornithine = L-citrulline + phosphate + H(+). The protein operates within amino-acid biosynthesis; L-arginine biosynthesis; L-arginine from L-ornithine and carbamoyl phosphate: step 1/3. Reversibly catalyzes the transfer of the carbamoyl group from carbamoyl phosphate (CP) to the N(epsilon) atom of ornithine (ORN) to produce L-citrulline. This is Ornithine carbamoyltransferase from Dechloromonas aromatica (strain RCB).